We begin with the raw amino-acid sequence, 91 residues long: Phosphocarrier protein NPr (91 aa).

Positions 3 to 90 constitute an HPr domain; sequence KLERQVTICN…ALVDAKFDEA (88 aa). Catalysis depends on His17, which acts as the Pros-phosphohistidine intermediate.

It belongs to the HPr family.

The protein localises to the cytoplasm. Component of the phosphoenolpyruvate-dependent nitrogen-metabolic phosphotransferase system (nitrogen-metabolic PTS), that seems to be involved in regulating nitrogen metabolism. The phosphoryl group from phosphoenolpyruvate (PEP) is transferred to the phosphoryl carrier protein NPr by enzyme I-Ntr. Phospho-NPr then transfers it to EIIA-Ntr. Could function in the transcriptional regulation of sigma-54 dependent operons in conjunction with the NPr (PtsO) and EIIA-Ntr (PtsN) proteins. This Shewanella violacea (strain JCM 10179 / CIP 106290 / LMG 19151 / DSS12) protein is Phosphocarrier protein NPr (ptsO).